Here is a 109-residue protein sequence, read N- to C-terminus: Small ribosomal subunit protein bS6 (109 aa).

It belongs to the bacterial ribosomal protein bS6 family.

Its function is as follows. Binds together with bS18 to 16S ribosomal RNA. The protein is Small ribosomal subunit protein bS6 of Dehalococcoides mccartyi (strain ATCC BAA-2266 / KCTC 15142 / 195) (Dehalococcoides ethenogenes (strain 195)).